A 226-amino-acid chain; its full sequence is MSSRERKATDTAGRHSRMDPNLSSDDSQNPGAVAAANREVLDAGREDIISSGTERQQARKEKQDLVQEFEEPPNKVLQENREKFSRIMTSSFSAMEVKIKDVLKTQCEQRQKLCQDYSLQFTNLSRKLTSDAYKLKKQAETLSNMFMEQQKFIHETLTLQKNRMEEFKSLCEKYLEKLEVLRDSRGNSIAEELRRLIATLEIKLLMLHNQQNTAAPPQSLLDVLFS.

The segment covering 1 to 18 (MSSRERKATDTAGRHSRM) has biased composition (basic and acidic residues). Residues 1–72 (MSSRERKATD…QDLVQEFEEP (72 aa)) are disordered. Polar residues predominate over residues 21-30 (NLSSDDSQNP). Basic and acidic residues-rich tracts occupy residues 39–48 (EVLDAGREDI) and 56–65 (QQARKEKQDL). Residues 155-210 (ETLTLQKNRMEEFKSLCEKYLEKLEVLRDSRGNSIAEELRRLIATLEIKLLMLHNQ) are a coiled coil.

It belongs to the XLR/SYCP3 family. In terms of tissue distribution, expressed in lymphoid cells.

This is X-linked lymphocyte-regulated protein 3A (Xlr3a) from Mus musculus (Mouse).